Reading from the N-terminus, the 132-residue chain is uncharacterized protein (132 aa).

An HTH merR-type domain is found at 1 to 69 (MNIGEAAKKS…LDEVGKLLTL (69 aa)). The segment at residues 4–23 (GEAAKKSGLTPKMIRYYESI) is a DNA-binding region (H-T-H motif).

It is found in the cytoplasm. This is an uncharacterized protein from Pseudomonas aeruginosa (strain ATCC 15692 / DSM 22644 / CIP 104116 / JCM 14847 / LMG 12228 / 1C / PRS 101 / PAO1).